The primary structure comprises 238 residues: Major prion protein (238 aa).

The signal sequence occupies residues 1-15; the sequence is MLVLFVATWSDLGLC. Positions 16 to 215 are interaction with GRB2, ERI3 and SYN1; sequence KKRPKPGGWN…ESQAYYQRGS (200 aa). Residues 18–93 are disordered; that stretch reads RPKPGGWNTG…WHKPSKPKTS (76 aa). 4 consecutive repeat copies span residues 44 to 52, 53 to 60, 61 to 68, and 69 to 76. The 4 X 8 AA tandem repeats of P-H-G-G-G-W-G-Q stretch occupies residues 44-83; that stretch reads PQGGGGWGQPHGGGWGQPHGGGWGQPHGGGWGQGGGTHNQ. Residues 45–80 are compositionally biased toward gly residues; the sequence is QGGGGWGQPHGGGWGQPHGGGWGQPHGGGWGQGGGT. Cu(2+) contacts are provided by glycine 47, glycine 48, histidine 54, glycine 55, glycine 56, histidine 62, glycine 63, glycine 64, histidine 70, glycine 71, and glycine 72. Residues 83–93 are compositionally biased toward basic residues; the sequence is QWHKPSKPKTS. Cysteine 164 and cysteine 199 are joined by a disulfide. N-linked (GlcNAc...) asparagine glycosylation is found at asparagine 166 and asparagine 182. Serine 215 carries the GPI-anchor amidated serine lipid modification. The propeptide at 216–238 is removed in mature form; that stretch reads SIVLFSSPPVILLISFLIFLIVG.

The protein belongs to the prion family. Monomer and homodimer. Has a tendency to aggregate into amyloid fibrils containing a cross-beta spine, formed by a steric zipper of superposed beta-strands. Soluble oligomers may represent an intermediate stage on the path to fibril formation. Copper binding may promote oligomerization. Interacts with GRB2, APP, ERI3/PRNPIP and SYN1. Mislocalized cytosolically exposed PrP interacts with MGRN1; this interaction alters MGRN1 subcellular location and causes lysosomal enlargement. Interacts with KIAA1191.

The protein resides in the cell membrane. Its subcellular location is the golgi apparatus. Its primary physiological function is unclear. Has cytoprotective activity against internal or environmental stresses. May play a role in neuronal development and synaptic plasticity. May be required for neuronal myelin sheath maintenance. May play a role in iron uptake and iron homeostasis. Soluble oligomers are toxic to cultured neuroblastoma cells and induce apoptosis (in vitro). Association with GPC1 (via its heparan sulfate chains) targets PRNP to lipid rafts. Also provides Cu(2+) or Zn(2+) for the ascorbate-mediated GPC1 deaminase degradation of its heparan sulfate side chains. This chain is Major prion protein (PRNP), found in Theropithecus gelada (Gelada baboon).